The sequence spans 504 residues: Deoxyguanosinetriphosphate triphosphohydrolase (504 aa).

One can recognise an HD domain in the interval 66–273 (RLTHSMEVQQ…MEAADDISYC (208 aa)).

The protein belongs to the dGTPase family. Type 1 subfamily. Homotetramer. Requires Mg(2+) as cofactor.

The enzyme catalyses dGTP + H2O = 2'-deoxyguanosine + triphosphate + H(+). In terms of biological role, dGTPase preferentially hydrolyzes dGTP over the other canonical NTPs. This Enterobacter sp. (strain 638) protein is Deoxyguanosinetriphosphate triphosphohydrolase.